The chain runs to 724 residues: Acyl-coenzyme A oxidase 2 (724 aa).

The segment at Met-1–Pro-23 is disordered. The span at Leu-7–Thr-21 shows a compositional bias: basic and acidic residues.

The protein belongs to the acyl-CoA oxidase family. It depends on FAD as a cofactor.

It localises to the peroxisome. It catalyses the reaction a 2,3-saturated acyl-CoA + O2 = a (2E)-enoyl-CoA + H2O2. It participates in lipid metabolism; peroxisomal fatty acid beta-oxidation. The sequence is that of Acyl-coenzyme A oxidase 2 (POX2) from Candida maltosa (Yeast).